A 451-amino-acid polypeptide reads, in one-letter code: Probable phosphoglucosamine mutase (451 aa).

Ser-96 (phosphoserine intermediate) is an active-site residue. Ser-96, Asp-233, Asp-235, and Asp-237 together coordinate Mg(2+). Ser-96 carries the post-translational modification Phosphoserine.

It belongs to the phosphohexose mutase family. It depends on Mg(2+) as a cofactor. In terms of processing, activated by phosphorylation.

It catalyses the reaction alpha-D-glucosamine 1-phosphate = D-glucosamine 6-phosphate. Its function is as follows. Catalyzes the conversion of glucosamine-6-phosphate to glucosamine-1-phosphate. This is Probable phosphoglucosamine mutase from Pyrococcus abyssi (strain GE5 / Orsay).